Consider the following 797-residue polypeptide: MELDKDIQTTQKGFHCNLCHVNIPNRPSLEDHVKGKKHLHLLRLRAQRKTQEENSVFVSGFKADTSQTELKEYFQQFGLVTDVIMDKQKGVYAIVEFSESQDVQTTLAQPQHQLNGLKLRVKPREKKEFKLASRGKQDCKNTLISLDKLNFELCKAMSVNEQIQKVVESLELKDNEKKVRDLLVQLLQEVFTEFFPDCQIVPFGSSVNTFGLHSCDLDLFLDLENTKVFQARAKSSEQTGENQSEDCRSEDSILSDIDLSTASPAEILELVAVILRKCVPGVHKVQALSTARLPVVKFSHKELNLQGDITINNRLAVRNTKFLQLCSGIDSRLRPLVYTIRLWAKQKQLAGNLSGPGPLLNNYALTLLVIFFLQNRDPPVLPSVNQLKNMACEEEECAIEEWDCTFPSQPFSVPPSKNTEDLCTLLFGFFTFYSKFDFPASVVSLRDGHVLPITDFLKSDMEALKTADASSPKPKRSSAPRLGPMNVLDPFELNHNVAGNLNERTQKNFKRECCEAEKYCRSLQYQRKSAKGKSWGLVRLFAPQSEAAASSQPRAEKVLEVSVPFKPASLPESLRAQLASAGKDFRGLWFAEVCSAVQKVFNEILQCSPTEETQSLDKTDKSGSEMEVNNNRSLEDTNIQVKGEAGKKRPLSVEEGPSTFTITQAKRQRLDVDLEHPEPLHWTWTQRSRVWAGRRKVRRDLLKTSDEASKPEGGCVDMESRVTQSIVEKEEKLHDALEFKVDAEVVGGNESTKVVLRFHPSIDTAGVFQDFFHFLESFLPKMAETIMGRAEDITDMS.

The Matrin-type zinc finger occupies 14–44 (FHCNLCHVNIPNRPSLEDHVKGKKHLHLLRL). The RRM domain maps to 54–126 (NSVFVSGFKA…LKLRVKPREK (73 aa)). Residue Ser-205 participates in ATP binding. Positions 216 and 218 each coordinate Mg(2+). The UTP site is built by Asp-216, Asp-218, Asn-319, Arg-341, Tyr-363, and His-495. Asn-319 is a binding site for ATP. Residues 421–495 (DLCTLLFGFF…NVLDPFELNH (75 aa)) enclose the PAP-associated domain. The tract at residues 544–787 (QSEAAASSQP…FLPKMAETIM (244 aa)) is KA1; binds the bulging loops of U6 snRNA but is dispensable for terminal uridylyltransferase activity. Positions 611–659 (EETQSLDKTDKSGSEMEVNNNRSLEDTNIQVKGEAGKKRPLSVEEGPST) are disordered. Over residues 615-624 (SLDKTDKSGS) the composition is skewed to basic and acidic residues. Residues 627–640 (EVNNNRSLEDTNIQ) are compositionally biased toward polar residues.

It belongs to the DNA polymerase type-B-like family. Associates with the cleavage and polyadenylation specificity factor (CPSF) complex. Mg(2+) serves as cofactor. Mn(2+) is required as a cofactor.

The protein resides in the nucleus. It localises to the nucleolus. Its subcellular location is the nucleus speckle. It catalyses the reaction RNA(n) + UTP = RNA(n)-3'-uridine ribonucleotide + diphosphate. The catalysed reaction is RNA(n) + ATP = RNA(n)-3'-adenine ribonucleotide + diphosphate. In terms of biological role, poly(A) polymerase that creates the 3'-poly(A) tail of specific pre-mRNAs. In addition to polyadenylation, it is also required for the 3'-end cleavage of pre-mRNAs: binds to the 3'UTR of targeted pre-mRNAs and promotes the recruitment and assembly of the CPSF complex on the 3'UTR of pre-mRNAs. In addition to adenylyltransferase activity, also has uridylyltransferase activity. However, the ATP ratio is higher than UTP in cells, suggesting that it functions primarily as a poly(A) polymerase. This chain is Speckle targeted PIP5K1A-regulated poly(A) polymerase (tut1), found in Danio rerio (Zebrafish).